A 268-amino-acid chain; its full sequence is Interleukin-2 receptor subunit alpha (268 aa).

The signal sequence occupies residues 1-21 (MEPCLLMWGILTFITVSGYTT). The Sushi 1 domain maps to 22–81 (DLCDDDPPNLKHATFKALTYKTGTVLNCDCERGFRRISSYMHCTGNSSHASWENKCRCKS). Topologically, residues 22–237 (DLCDDDPPNL…ESFIFTTEYQ (216 aa)) are extracellular. Disulfide bonds link C24–C64, C49–C77, and C51–C79. N67 carries an N-linked (GlcNAc...) asparagine glycan. Residues 83 to 112 (SPENRKGKVTTKPEEQKGENPTEMQSQTPP) form a disordered region. The segment covering 85 to 102 (ENRKGKVTTKPEEQKGEN) has biased composition (basic and acidic residues). One can recognise a Sushi 2 domain in the interval 120-183 (GHCREPPPWE…WTQPPLKCIS (64 aa)). 2 disulfide bridges follow: C122–C165 and C149–C181. A disordered region spans residues 186–213 (QFPDDEELQASTDAPAGRDTSSPFITTS). Residues 204–213 (DTSSPFITTS) show a composition bias toward polar residues. Residues 238–258 (IAVASCVLLLISIVLLSGLTW) form a helical membrane-spanning segment. Residues 259–268 (QRRRRKSRTI) are Cytoplasmic-facing.

As to quaternary structure, non-covalent dimer of an alpha and a beta subunit. IL2R exists in 3 different forms: a high affinity dimer, an intermediate affinity monomer (beta subunit), and a low affinity monomer (alpha subunit). The high and intermediate affinity forms also associate with a gamma subunit.

The protein resides in the membrane. Receptor for interleukin-2. The receptor is involved in the regulation of immune tolerance by controlling regulatory T cells (TREGs) activity. TREGs suppress the activation and expansion of autoreactive T-cells. This is Interleukin-2 receptor subunit alpha (IL2RA) from Canis lupus familiaris (Dog).